The sequence spans 205 residues: Putative 3-methyladenine DNA glycosylase (205 aa).

This sequence belongs to the DNA glycosylase MPG family.

This chain is Putative 3-methyladenine DNA glycosylase, found in Clostridium acetobutylicum (strain ATCC 824 / DSM 792 / JCM 1419 / IAM 19013 / LMG 5710 / NBRC 13948 / NRRL B-527 / VKM B-1787 / 2291 / W).